Consider the following 311-residue polypeptide: Cbb3-type cytochrome c oxidase subunit CcoP1 (311 aa).

2 consecutive transmembrane segments (helical) span residues 4 to 24 and 56 to 76; these read FWSG…FWLI and RWWF…LVLY. Cytochrome c domains follow at residues 130-209 and 220-302; these read QAVK…RKDL and ADLS…YSLS. Residues Cys143, Cys146, His147, Met186, Cys233, Cys236, His237, and Met279 each contribute to the heme c site.

The protein belongs to the CcoP / FixP family. In terms of assembly, component of the cbb3-type cytochrome c oxidase at least composed of CcoN, CcoO, CcoQ and CcoP. The cofactor is heme c.

The protein localises to the cell inner membrane. It participates in energy metabolism; oxidative phosphorylation. C-type cytochrome. Part of the cbb3-type cytochrome c oxidase complex. CcoP subunit is required for transferring electrons from donor cytochrome c via its heme groups to CcoO subunit. From there, electrons are shuttled to the catalytic binuclear center of CcoN subunit where oxygen reduction takes place. The complex also functions as a proton pump. This chain is Cbb3-type cytochrome c oxidase subunit CcoP1, found in Stutzerimonas stutzeri (Pseudomonas stutzeri).